The sequence spans 109 residues: Parvalbumin alpha (109 aa).

2 consecutive EF-hand domains span residues 38–73 (KSKEIMQKVFHVLDQDQSGFIEKEELCLILKGFTPE) and 77–109 (LSDKETTALLAAGDKDGDGKIGVDEFVTLVSES). Ca(2+)-binding residues include Asp-51, Asp-53, Ser-55, Phe-57, Glu-59, Glu-62, Asp-90, Asp-92, Asp-94, Lys-96, and Glu-101.

It belongs to the parvalbumin family.

Functionally, in muscle, parvalbumin is thought to be involved in relaxation after contraction. It binds two calcium ions. This is Parvalbumin alpha from Pelophylax lessonae (Pool frog).